The primary structure comprises 569 residues: Endo-1,4-beta-xylanase 5 (569 aa).

The first 25 residues, 1 to 25 (MKNINNGFFLCMLLLLWCFVHSGIS), serve as a signal peptide directing secretion. N-linked (GlcNAc...) asparagine glycans are attached at residues Asn197, Asn261, and Asn307. The 292-residue stretch at 209-500 (EQTKPSFLLG…NTATGDVIDK (292 aa)) folds into the GH10 domain. Glu332 serves as the catalytic Proton donor. N-linked (GlcNAc...) asparagine glycosylation occurs at Asn346. Catalysis depends on Glu439, which acts as the Nucleophile. 3 N-linked (GlcNAc...) asparagine glycosylation sites follow: Asn490, Asn536, and Asn544.

This sequence belongs to the glycosyl hydrolase 10 (cellulase F) family.

The enzyme catalyses Endohydrolysis of (1-&gt;4)-beta-D-xylosidic linkages in xylans.. The protein operates within glycan degradation; xylan degradation. Functionally, binds to and hydrolyzes insoluble and soluble xylan substrates. The polypeptide is Endo-1,4-beta-xylanase 5 (Arabidopsis thaliana (Mouse-ear cress)).